A 515-amino-acid polypeptide reads, in one-letter code: Glucose-6-phosphate 1-dehydrogenase (515 aa).

N-acetylalanine is present on A2. S8 is modified (phosphoserine). At T10 the chain carries Phosphothreonine. NADP(+) is bound by residues 38–45 and R72; that span reads GASGDLAK. N6-acetyllysine is present on K89. NADP(+) is bound by residues Y147 and K171. Residues K171, 201-205, E239, and D258 each bind D-glucose 6-phosphate; that span reads HYLGK. K171 carries the N6-(2-hydroxyisobutyryl)lysine; alternate modification. K171 bears the N6-acetyllysine; alternate mark. Catalysis depends on H263, which acts as the Proton acceptor. R357 provides a ligand contact to NADP(+). D-glucose 6-phosphate contacts are provided by K360 and R365. NADP(+) is bound by residues K366, R370, and R393. Q395 serves as a coordination point for D-glucose 6-phosphate. NADP(+) contacts are provided by residues 401–403 and 421–423; these read YTK and DLT. The residue at position 403 (K403) is an N6-acetyllysine. K432 is modified (N6-acetyllysine). An NADP(+)-binding site is contributed by R487. K497 carries the N6-acetyllysine modification. Residues Y503 and W509 each contribute to the NADP(+) site. Y503 is modified (phosphotyrosine).

This sequence belongs to the glucose-6-phosphate dehydrogenase family. As to quaternary structure, homotetramer; dimer of dimers. Interacts with SIRT2; the interaction is enhanced by H(2)O(2) treatment. Forms a ternary complex with ALDOB and TP53; this interaction is direct. ALDOB stabilizes the complex inhibiting G6PD activity and keeping oxidative pentose phosphate metabolism in check. Acetylated by ELP3 at Lys-403; acetylation inhibits its homodimerization and enzyme activity. Deacetylated by SIRT2 at Lys-403; deacetylation stimulates its enzyme activity.

The protein resides in the cytoplasm. The protein localises to the cytosol. It is found in the membrane. The catalysed reaction is D-glucose 6-phosphate + NADP(+) = 6-phospho-D-glucono-1,5-lactone + NADPH + H(+). It functions in the pathway carbohydrate degradation; pentose phosphate pathway; D-ribulose 5-phosphate from D-glucose 6-phosphate (oxidative stage): step 1/3. Its function is as follows. Cytosolic glucose-6-phosphate dehydrogenase that catalyzes the first and rate-limiting step of the oxidative branch within the pentose phosphate pathway/shunt, an alternative route to glycolysis for the dissimilation of carbohydrates and a major source of reducing power and metabolic intermediates for fatty acid and nucleic acid biosynthetic processes. This is Glucose-6-phosphate 1-dehydrogenase (G6PD) from Osphranter robustus (Wallaroo).